Consider the following 618-residue polypeptide: Leucine aminopeptidase 2 (618 aa).

A peptide-binding positions include 139-141 and 271-276; these read QCQ and PYGGME. His-300 is a Zn(2+) binding site. Catalysis depends on Glu-301, which acts as the Proton acceptor. Positions 304 and 323 each coordinate Zn(2+). Catalysis depends on Tyr-388, which acts as the Proton donor.

This sequence belongs to the peptidase M1 family. Zn(2+) is required as a cofactor.

Its subcellular location is the cytoplasm. The protein localises to the nucleus. It catalyses the reaction an epoxide + H2O = an ethanediol. Functionally, aminopeptidase that preferentially cleaves di- and tripeptides. Also has low epoxide hydrolase activity (in vitro). Can hydrolyze the epoxide leukotriene LTA(4) but it forms preferentially 5,6-dihydroxy-7,9,11,14-eicosatetraenoic acid rather than the cytokine leukotriene B(4) as the product compared to the homologous mammalian enzyme (in vitro). The protein is Leucine aminopeptidase 2 of Aspergillus niger (strain ATCC MYA-4892 / CBS 513.88 / FGSC A1513).